The chain runs to 379 residues: NuA4 complex subunit EAF3 homolog (379 aa).

Positions glutamate 6–isoleucine 61 constitute a Tudor-knot domain. A disordered region spans residues threonine 75 to phenylalanine 212. The span at lysine 78–lysine 87 shows a compositional bias: low complexity. Positions glutamate 111 to glutamate 141 are enriched in acidic residues. Positions serine 165–asparagine 199 are enriched in low complexity. The MRG domain maps to serine 214–serine 377.

In terms of assembly, component of the NuA4 histone acetyltransferase complex.

Its subcellular location is the nucleus. In terms of biological role, component of the NuA4 histone acetyltransferase complex which is involved in transcriptional activation of selected genes principally by acetylation of nucleosomal histone H4 and H2A. The NuA4 complex is also involved in DNA repair. Also a component of a complex which acts to repress transcription by deacetylation of nucleosomal histones. The protein is NuA4 complex subunit EAF3 homolog of Dictyostelium discoideum (Social amoeba).